A 420-amino-acid chain; its full sequence is Probable pectate lyase C (420 aa).

A signal peptide spans 1–20; sequence MKLSEPLLVSLAAFSQAVTA. Residues Asn-49, Asn-165, and Asn-202 are each glycosylated (N-linked (GlcNAc...) asparagine). The active site involves Arg-205. Residues 262–297 enclose the EF-hand domain; it reads NANFHGYVQNNYYDPDKDGQLDGFELGVSSSNYGGM. Positions 275, 277, 279, 281, and 286 each coordinate Ca(2+). The segment at 358 to 396 is disordered; that stretch reads TMGGPGTLNGGTPAKDTDGDGIPDEAEKQLGTDPNTNDS. Asn-394 carries N-linked (GlcNAc...) asparagine glycosylation.

It belongs to the polysaccharide lyase 1 family. Ca(2+) is required as a cofactor.

The protein resides in the secreted. It catalyses the reaction Eliminative cleavage of (1-&gt;4)-alpha-D-galacturonan to give oligosaccharides with 4-deoxy-alpha-D-galact-4-enuronosyl groups at their non-reducing ends.. Its function is as follows. Pectinolytic enzyme consist of four classes of enzymes: pectin lyase, polygalacturonase, pectin methylesterase and rhamnogalacturonase. Among pectinolytic enzymes, pectin lyase is the most important in depolymerization of pectin, since it cleaves internal glycosidic bonds of highly methylated pectins. Favors pectate, the anion, over pectin, the methyl ester. In Aspergillus fumigatus (strain ATCC MYA-4609 / CBS 101355 / FGSC A1100 / Af293) (Neosartorya fumigata), this protein is Probable pectate lyase C (plyC).